Reading from the N-terminus, the 509-residue chain is Pentatricopeptide repeat-containing protein At2g13420, mitochondrial (509 aa).

The N-terminal 19 residues, 1–19 (MLLLKQISPPFHLHQLRRR), are a transit peptide targeting the mitochondrion. PPR repeat units lie at residues 172 to 202 (RLVEFGFLLDTLCKYGYTKMAVGVFNERKEE), 206 to 240 (DEKVYTILIAGWCKLRRIDMAEKFLVEMIESGIEP), 241 to 285 (NVVT…GIEP), 286 to 320 (DVTSFSIVLHMYSRAHKAELTLDKMKLMKAKGISP), 321 to 355 (TIETYTSVVKCLCSCGRLEEAEELLETMVESGISP), 356 to 390 (SSATYNCFFKEYKGRKDANGAMNLYRKMKNGLCKP), 391 to 425 (STQTYNVLLGTFINLGKMETVKEIWDDLKASETGP), and 426 to 460 (DLDSYTSLVHGLCSKEKWKEACGYFVEMIERGFLP).

It belongs to the PPR family. P subfamily.

It is found in the mitochondrion. In Arabidopsis thaliana (Mouse-ear cress), this protein is Pentatricopeptide repeat-containing protein At2g13420, mitochondrial.